The primary structure comprises 204 residues: MPGLIGKKIGMTSIFSVEGKNLPCTVMEVGPCVVTQVKTVDKDGYEAVQVGFEDKKEKHTTKPERGHFKRAGVSFKRYLAEFKEQGKYKEGDVITVDFFNKGIYVDVVGISKGKGFQGVVKRHGFRGVGEATLGQSDRQRHPGSIGACSYPAKVFKGTRMAGQMGNTKVTIQNLEVIELISKYNLLIVKGSVPGSKGSILIVKK.

The protein belongs to the universal ribosomal protein uL3 family. In terms of assembly, part of the 50S ribosomal subunit. Forms a cluster with proteins L14 and L19.

In terms of biological role, one of the primary rRNA binding proteins, it binds directly near the 3'-end of the 23S rRNA, where it nucleates assembly of the 50S subunit. In Azobacteroides pseudotrichonymphae genomovar. CFP2, this protein is Large ribosomal subunit protein uL3.